Consider the following 306-residue polypeptide: MTTIIDGKAVAASINGAIKDANAELQEQTGRKTGLSVIIVGDDPASHAYVGAKSRMAKECGFFSVQHTLPKETTQQELAGLVHQLNADDGIHGILVQLPLPEHLDADAIIQSIRPEKDVDGLHVANAGKLATGDLESGLISCTPAGAMVFVRRVHGRDLSGLNALVIGRSNLFGKPMAQLLLNANATVTIAHSRTSDLASICRNADIVIAAVGRPEMVKANWLKTGATVIDVGINRVPAPEKGENRTRLVGDVAFAECAPFASAITPVPGGVGPMTIAMLMANSVIAAHRASGLKVSERLSKLISG.

NADP(+) is bound by residues 168–170 (GRS), S193, and I234.

The protein belongs to the tetrahydrofolate dehydrogenase/cyclohydrolase family. In terms of assembly, homodimer.

It catalyses the reaction (6R)-5,10-methylene-5,6,7,8-tetrahydrofolate + NADP(+) = (6R)-5,10-methenyltetrahydrofolate + NADPH. The enzyme catalyses (6R)-5,10-methenyltetrahydrofolate + H2O = (6R)-10-formyltetrahydrofolate + H(+). The protein operates within one-carbon metabolism; tetrahydrofolate interconversion. Catalyzes the oxidation of 5,10-methylenetetrahydrofolate to 5,10-methenyltetrahydrofolate and then the hydrolysis of 5,10-methenyltetrahydrofolate to 10-formyltetrahydrofolate. This chain is Bifunctional protein FolD 1, found in Rhizobium meliloti (strain 1021) (Ensifer meliloti).